The primary structure comprises 564 residues: Bifunctional protein CrtB/UppS (564 aa).

D329 is a catalytic residue. D329 lines the Mg(2+) pocket. Residues 330–333 (GNRR), W334, H346, and 374–376 (STE) each bind substrate. N377 acts as the Proton acceptor in catalysis. Substrate is bound by residues W378, R380, R497, and 502–504 (RIS). Mg(2+) is bound at residue E515.

The protein in the N-terminal section; belongs to the phytoene/squalene synthase family. In the C-terminal section; belongs to the UPP synthase family. Homodimer. Mg(2+) serves as cofactor.

The enzyme catalyses 2 (2E,6E,10E)-geranylgeranyl diphosphate = 15-cis-phytoene + 2 diphosphate. It functions in the pathway carotenoid biosynthesis; phytoene biosynthesis; all-trans-phytoene from geranylgeranyl diphosphate: step 1/1. In terms of biological role, catalyzes the reaction from prephytoene diphosphate to phytoene. Its function is as follows. Catalyzes the condensation of isopentenyl diphosphate (IPP) with allylic pyrophosphates generating different type of terpenoids. The sequence is that of Bifunctional protein CrtB/UppS (crtB/uppS3) from Streptomyces coelicolor (strain ATCC BAA-471 / A3(2) / M145).